The primary structure comprises 139 residues: Nucleoside diphosphate kinase (139 aa).

The ATP site is built by K11, F59, R87, T93, R104, and N114. H117 (pros-phosphohistidine intermediate) is an active-site residue.

The protein belongs to the NDK family. Homotetramer. It depends on Mg(2+) as a cofactor.

It is found in the cytoplasm. The catalysed reaction is a 2'-deoxyribonucleoside 5'-diphosphate + ATP = a 2'-deoxyribonucleoside 5'-triphosphate + ADP. It catalyses the reaction a ribonucleoside 5'-diphosphate + ATP = a ribonucleoside 5'-triphosphate + ADP. In terms of biological role, major role in the synthesis of nucleoside triphosphates other than ATP. The ATP gamma phosphate is transferred to the NDP beta phosphate via a ping-pong mechanism, using a phosphorylated active-site intermediate. In Wolbachia pipientis wMel, this protein is Nucleoside diphosphate kinase.